Consider the following 420-residue polypeptide: Putative transporter AmpG 3 (420 aa).

12 helical membrane-spanning segments follow: residues tyrosine 6 to phenylalanine 26, isoleucine 41 to phenylalanine 61, glycine 79 to serine 99, leucine 104 to valine 124, isoleucine 141 to alanine 161, isoleucine 166 to isoleucine 186, leucine 230 to methionine 250, leucine 274 to phenylalanine 294, valine 297 to isoleucine 317, phenylalanine 324 to isoleucine 344, tyrosine 359 to alanine 381, and tryptophan 386 to isoleucine 406.

Belongs to the major facilitator superfamily.

It localises to the cell inner membrane. The sequence is that of Putative transporter AmpG 3 (ampG3) from Rickettsia typhi (strain ATCC VR-144 / Wilmington).